Reading from the N-terminus, the 334-residue chain is Protein-methionine-sulfoxide reductase catalytic subunit MsrP (334 aa).

The segment at residues M1–A44 is a signal peptide (tat-type signal). Mo-molybdopterin is bound by residues N88, Y91–E92, C146, T181, N233, R238, and G249–K251.

Belongs to the MsrP family. Heterodimer of a catalytic subunit (MsrP) and a heme-binding subunit (MsrQ). Mo-molybdopterin is required as a cofactor. Predicted to be exported by the Tat system. The position of the signal peptide cleavage has not been experimentally proven.

The protein localises to the periplasm. It carries out the reaction L-methionyl-[protein] + a quinone + H2O = L-methionyl-(S)-S-oxide-[protein] + a quinol. It catalyses the reaction L-methionyl-[protein] + a quinone + H2O = L-methionyl-(R)-S-oxide-[protein] + a quinol. In terms of biological role, part of the MsrPQ system that repairs oxidized periplasmic proteins containing methionine sulfoxide residues (Met-O), using respiratory chain electrons. Thus protects these proteins from oxidative-stress damage caused by reactive species of oxygen and chlorine generated by the host defense mechanisms. MsrPQ is essential for the maintenance of envelope integrity under bleach stress, rescuing a wide series of structurally unrelated periplasmic proteins from methionine oxidation, including the primary periplasmic chaperone SurA and the lipoprotein Pal. The catalytic subunit MsrP is non-stereospecific, being able to reduce both (R-) and (S-) diastereoisomers of methionine sulfoxide. The protein is Protein-methionine-sulfoxide reductase catalytic subunit MsrP of Escherichia coli O157:H7.